The sequence spans 737 residues: Polyribonucleotide nucleotidyltransferase (737 aa).

Mg(2+) contacts are provided by Asp-514 and Asp-520. One can recognise a KH domain in the interval 580 to 639 (PRIITVKIPVDKIGEVIGPKGKMINQIQEDTGADITIEDDGTIYIGAQAGSQAEAARATI). Residues 651-723 (GERYLGTVVK…SRGKLSLIPV (73 aa)) enclose the S1 motif domain.

Belongs to the polyribonucleotide nucleotidyltransferase family. Mg(2+) is required as a cofactor.

It is found in the cytoplasm. It carries out the reaction RNA(n+1) + phosphate = RNA(n) + a ribonucleoside 5'-diphosphate. Functionally, involved in mRNA degradation. Catalyzes the phosphorolysis of single-stranded polyribonucleotides processively in the 3'- to 5'-direction. This chain is Polyribonucleotide nucleotidyltransferase, found in Streptomyces griseus subsp. griseus (strain JCM 4626 / CBS 651.72 / NBRC 13350 / KCC S-0626 / ISP 5235).